A 313-amino-acid polypeptide reads, in one-letter code: MEKFTIKDLTDNLKFEIISGQDKLDTEIKSYGINRAGLELADYFKPFKDQSEWRATLMSTKESGYMLQFDEETKIKKYTQLMKCGIPVLIITNKFKDKTLIKVAKRLNFPLLRSDYPITIQLVQKIQDIYDIYFSPTAEEHAALMNIFGTGVLIKGKSGIGKSELCLDLIKHNHLFIGDDRIILTNKSNKIIGRVHPILKNLIEIRGIGIFDIVKSNGYQVIMNESPVELVVELVEYKEQNIDNSDRLGNDWSKFKILGVEIEHIQIPVSAGRSLVNIIESAVAQFKINKSKQFENVFDVIHKRTKEFLSSKK.

Residues H141 and K162 contribute to the active site. 156–163 lines the ATP pocket; the sequence is GKSGIGKS. S163 contributes to the Mg(2+) binding site. D180 acts as the Proton acceptor; for phosphorylation activity. Proton donor; for dephosphorylation activity in catalysis. The interval 203-212 is important for the catalytic mechanism of both phosphorylation and dephosphorylation; sequence IEIRGIGIFD. E204 is a Mg(2+) binding site. Residue R247 is part of the active site. The tract at residues 268-273 is important for the catalytic mechanism of dephosphorylation; sequence PVSAGR.

It belongs to the HPrK/P family. In terms of assembly, homohexamer. It depends on Mg(2+) as a cofactor.

The enzyme catalyses [HPr protein]-L-serine + ATP = [HPr protein]-O-phospho-L-serine + ADP + H(+). It carries out the reaction [HPr protein]-O-phospho-L-serine + phosphate + H(+) = [HPr protein]-L-serine + diphosphate. Functionally, catalyzes the ATP- as well as the pyrophosphate-dependent phosphorylation of a specific serine residue in HPr, a phosphocarrier protein of the phosphoenolpyruvate-dependent sugar phosphotransferase system (PTS). HprK/P also catalyzes the pyrophosphate-producing, inorganic phosphate-dependent dephosphorylation (phosphorolysis) of seryl-phosphorylated HPr (P-Ser-HPr). The two antagonistic activities of HprK/P are regulated by several intracellular metabolites, which change their concentration in response to the absence or presence of rapidly metabolisable carbon sources (glucose, fructose, etc.) in the growth medium. Therefore, by controlling the phosphorylation state of HPr, HPrK/P is a sensor enzyme that plays a major role in the regulation of carbon metabolism and sugar transport: it mediates carbon catabolite repression (CCR), and regulates PTS-catalyzed carbohydrate uptake and inducer exclusion. The chain is HPr kinase/phosphorylase from Mycoplasma mycoides subsp. mycoides SC (strain CCUG 32753 / NCTC 10114 / PG1).